A 178-amino-acid chain; its full sequence is DELTA-miturgitoxin-Cp3a (178 aa).

Positions 1–18 (MKALYLLGLLAFLYSCSS) are cleaved as a signal peptide. Positions 19–46 (ENVYDLQPESSEEENPGTFLEAIQEQSR) are excised as a propeptide. The short motif at 43–46 (EQSR) is the Processing quadruplet motif element. Intrachain disulfides connect Cys48–Cys63, Cys55–Cys72, Cys62–Cys86, Cys74–Cys84, Cys113–Cys128, Cys120–Cys137, Cys127–Cys155, and Cys139–Cys153.

This sequence belongs to the spider toxin CSTX family. Double-CSTX subfamily. Post-translationally, cleavage of the propeptide depends on the processing quadruplet motif (XXXR, with at least one of X being E). In terms of tissue distribution, expressed by the venom gland.

The protein resides in the secreted. Functionally, spider venom toxin that exhibits cytolytic activity by forming an alpha-helix across the membrane. Lethal to insect larvae. The chain is DELTA-miturgitoxin-Cp3a from Cheiracanthium punctorium (Yellow sac spider).